We begin with the raw amino-acid sequence, 61 residues long: Small ribosomal subunit protein uS14 (61 aa).

4 residues coordinate Zn(2+): Cys-24, Cys-27, Cys-40, and Cys-43.

The protein belongs to the universal ribosomal protein uS14 family. Zinc-binding uS14 subfamily. As to quaternary structure, part of the 30S ribosomal subunit. Contacts proteins S3 and S10. The cofactor is Zn(2+).

Its function is as follows. Binds 16S rRNA, required for the assembly of 30S particles and may also be responsible for determining the conformation of the 16S rRNA at the A site. This is Small ribosomal subunit protein uS14 from Desulfovibrio desulfuricans (strain ATCC 27774 / DSM 6949 / MB).